The following is a 251-amino-acid chain: ATP synthase subunit a 2 (251 aa).

5 helical membrane-spanning segments follow: residues 35–55, 94–114, 133–153, 198–218, and 219–239; these read GQVF…SLLA, LPFI…GSLI, INTT…AGLS, LVVA…LMAL, and GLFT…AYIH.

It belongs to the ATPase A chain family. F-type ATPases have 2 components, CF(1) - the catalytic core - and CF(0) - the membrane proton channel. CF(1) has five subunits: alpha(3), beta(3), gamma(1), delta(1), epsilon(1). CF(0) has four main subunits: a, b, b' and c.

The protein localises to the cellular thylakoid membrane. Its function is as follows. Key component of the proton channel; it plays a direct role in the translocation of protons across the membrane. This Crocosphaera subtropica (strain ATCC 51142 / BH68) (Cyanothece sp. (strain ATCC 51142)) protein is ATP synthase subunit a 2.